Here is an 867-residue protein sequence, read N- to C-terminus: Protein melted homolog (867 aa).

Positions 480–505 (MPSSSRTNVHLSQAASSSRGHSLPQT) are disordered. Residues 753–860 (EKVLEGQLKE…WLHCLQIAMA (108 aa)) form the PH domain.

This sequence belongs to the MELT/VEPH family.

Its subcellular location is the cell membrane. The sequence is that of Protein melted homolog from Caenorhabditis briggsae.